Here is a 925-residue protein sequence, read N- to C-terminus: MTPYRDVPPVSSRTHSSNRDRSQSRSRMSHESGSSVSTTSIVFDRISERVAAGDLSEKQPRGDDNEDALKDEPDNDDLETGPFLGNASGNGNSPRHAQKKGPGMDRGMRRALLIAAGLLVSAWVAGLFVYIATKSYKPASATAHDPQATIVRGSGKAVTLDQVMGSFWRPEVRSIQWIAGPEGEDGLLLERDAAGKDYLVVEDIRSQDAAAVDSSADAQAADARTLMEKGSFEYGKRVYNAVKVAPSRDLQRVLVATDVKSNWRHSSYAAYWIFDVKTQTADPLVPGEPDARIQLAQWNPTGDAVAFTRDNNLYLRKVGSDNIIQVTKDGGSEVFNGVPDWVYEEEVFSGSSATWWSEDGDYIAFLRTNETGVPEFPIDYFLKRPSGTEPKPGEEAYPETRKIKYPKAGAHNPVVELKFYDVVRGDVFSVDISGGFADDDRLITEVVWAGKQILVKETNRVSDVMRVVLVDVAARSGKTVRTTDVKAIDGGWFEITHQTKHIPADPSKGREHDGYIDLIIHGDGNHLAYFTPLDNPDPVMLTSGDWEVVDSPYAVDLDKNVVYFMATKESSIQRHVYQVKLTGEDLTAVSDTSSEGYYAASFSIGGGYALLTYQGPGIPWQKVISTPSNPRKYEHTVEENKDLADNAKKHELPIKIYGTINVDGVELNYVERRPAHFDASKKYPVLFQQYSGPGSQTVNKKFTVDFQSYVAAGLGYICVTVDGRGTGYIGRKNRVIVRGNLGQWEAHDQIAAAKIWAKKKYIDETRLAIWGWSFGGFNALKTLEQDAGETFRYGMAVAPVTDWRFYDSIYTERYMLTPQANGHGYDTSAIYNTTALGQNVRFLLMHGLADDNVHFQSSLTLLDKLNLAGVENYDVHVFPDSDHSIYFHNANRIVYDKLTNWLINAFNGEWIKVASPKPNGKRRAA.

Residues 1–104 form a disordered region; it reads MTPYRDVPPV…RHAQKKGPGM (104 aa). The Cytoplasmic segment spans residues 1-110; sequence MTPYRDVPPV…GPGMDRGMRR (110 aa). The segment covering 31 to 40 has biased composition (low complexity); it reads ESGSSVSTTS. The span at 55 to 72 shows a compositional bias: basic and acidic residues; it reads LSEKQPRGDDNEDALKDE. A helical; Signal-anchor for type II membrane protein membrane pass occupies residues 111–131; that stretch reads ALLIAAGLLVSAWVAGLFVYI. At 132-925 the chain is on the vacuolar side; it reads ATKSYKPASA…PKPNGKRRAA (794 aa). Asn-369 carries N-linked (GlcNAc...) asparagine glycosylation. The active-site Charge relay system is the Ser-773. A glycan (N-linked (GlcNAc...) asparagine) is linked at Asn-832. Residues Asp-850 and His-883 each act as charge relay system in the active site.

It belongs to the peptidase S9B family.

The protein resides in the vacuole membrane. The catalysed reaction is Release of an N-terminal dipeptide, Xaa-Yaa-|-Zaa-, from a polypeptide, preferentially when Yaa is Pro, provided Zaa is neither Pro nor hydroxyproline.. Its function is as follows. Type IV dipeptidyl-peptidase which removes N-terminal dipeptides sequentially from polypeptides having unsubstituted N-termini provided that the penultimate residue is proline. The polypeptide is Probable dipeptidyl-aminopeptidase B (DAPB) (Chaetomium globosum (strain ATCC 6205 / CBS 148.51 / DSM 1962 / NBRC 6347 / NRRL 1970) (Soil fungus)).